The primary structure comprises 722 residues: Probable dipeptidyl-peptidase 5 (722 aa).

The first 18 residues, 1 to 18, serve as a signal peptide directing secretion; it reads MGALRWLSLAAAASSALA. 7 N-linked (GlcNAc...) asparagine glycosylation sites follow: Asn-75, Asn-78, Asn-86, Asn-94, Asn-151, Asn-253, and Asn-448. Catalysis depends on Ser-558, which acts as the Charge relay system. Residue Asn-605 is glycosylated (N-linked (GlcNAc...) asparagine). Residues Asp-641 and His-673 each act as charge relay system in the active site.

It belongs to the peptidase S9C family.

Its subcellular location is the secreted. Extracellular dipeptidyl-peptidase which removes N-terminal dipeptides sequentially from polypeptides having unsubstituted N-termini. The chain is Probable dipeptidyl-peptidase 5 (dpp5) from Emericella nidulans (strain FGSC A4 / ATCC 38163 / CBS 112.46 / NRRL 194 / M139) (Aspergillus nidulans).